Reading from the N-terminus, the 234-residue chain is MGSSSSSSLNNSPIRADSMVTPESQMTVNDNKNDNVSILSPSVKKSFESPRKSTSIPANNNLTPVKSRWSFSSSKKSFGSKDETFFDSQPWLQSDSDDDFHSVNGDFTPSLGNTPKSSFSDRPPRFHNLIFHEKKPSRGSSSPAPLPRRKKLGELFRDSIREEREESGSSSAISTPYLSGANSREFNDTAIEKEEKKKSNWHHHRCLPGFSSCGGSFMERRKKMSSETPVVAVK.

Positions 1-12 (MGSSSSSSLNNS) are enriched in low complexity. The tract at residues 1 to 184 (MGSSSSSSLN…TPYLSGANSR (184 aa)) is disordered. Polar residues-rich tracts occupy residues 21 to 40 (TPES…SILS) and 52 to 64 (KSTS…NLTP). Low complexity predominate over residues 66–77 (KSRWSFSSSKKS). Polar residues predominate over residues 105–120 (GDFTPSLGNTPKSSFS). Positions 152–167 (LGELFRDSIREEREES) are enriched in basic and acidic residues.

Interacts with RLK902. Expressed in stems, rosette leaves and roots and weakly in inflorescences.

This is an uncharacterized protein from Arabidopsis thaliana (Mouse-ear cress).